The sequence spans 331 residues: Meiotic recombination protein P22 (331 aa).

The tract at residues 132–187 (NNIQKEVHQRNSQRRSIQCTPKKRGRKPKQPAKKLQSRISTDQLGSTPSPSKLPAK) is disordered. The segment covering 152–167 (PKKRGRKPKQPAKKLQ) has biased composition (basic residues). Polar residues predominate over residues 168–181 (SRISTDQLGSTPSP).

Belongs to the TOP6B-like family.

The protein resides in the chromosome. Functionally, required for formation of the mei-W68-mediated double-strand breaks (DSBs) that initiate meiotic recombination. The sequence is that of Meiotic recombination protein P22 from Drosophila melanogaster (Fruit fly).